Reading from the N-terminus, the 231-residue chain is Cytochrome c oxidase assembly factor 7A (231 aa).

Sel1-like repeat units lie at residues 34–66, 68–104, 108–145, 146–182, and 183–218; these read PDGC…DQNE, SESF…NKGG, IDSC…DGNF, AASC…SLGH, and VWGC…DLHK.

This sequence belongs to the hcp beta-lactamase family.

The protein localises to the mitochondrion intermembrane space. In terms of biological role, may be required for assembly of mitochondrial respiratory chain complexes. This Xenopus laevis (African clawed frog) protein is Cytochrome c oxidase assembly factor 7A (coa7-a).